The sequence spans 40 residues: Photosystem II reaction center protein J (40 aa).

The chain crosses the membrane as a helical span at residues 8–28 (IPLWIIGTVTGILVIGLVGIF).

It belongs to the PsbJ family. PSII is composed of 1 copy each of membrane proteins PsbA, PsbB, PsbC, PsbD, PsbE, PsbF, PsbH, PsbI, PsbJ, PsbK, PsbL, PsbM, PsbT, PsbX, PsbY, PsbZ, Psb30/Ycf12, at least 3 peripheral proteins of the oxygen-evolving complex and a large number of cofactors. It forms dimeric complexes.

Its subcellular location is the plastid. The protein resides in the chloroplast thylakoid membrane. Functionally, one of the components of the core complex of photosystem II (PSII). PSII is a light-driven water:plastoquinone oxidoreductase that uses light energy to abstract electrons from H(2)O, generating O(2) and a proton gradient subsequently used for ATP formation. It consists of a core antenna complex that captures photons, and an electron transfer chain that converts photonic excitation into a charge separation. This is Photosystem II reaction center protein J from Jasminum nudiflorum (Winter jasmine).